The primary structure comprises 122 residues: Crustacean hyperglycemic hormones 7 (122 aa).

The first 26 residues, 1 to 26, serve as a signal peptide directing secretion; that stretch reads MSLAMTAFRMMAVALVVVVASSTTWA. Cystine bridges form between C55/C91, C71/C87, and C74/C100. V120 carries the post-translational modification Valine amide.

Belongs to the arthropod CHH/MIH/GIH/VIH hormone family. As to expression, produced by the medulla terminalis X-organ in the eyestalks and transported to the sinus gland where they are stored and released.

The protein localises to the secreted. Its function is as follows. Hormone found in the sinus gland of isopods and decapods which controls the blood sugar level. Has a secretagogue action over the amylase released from the midgut gland. May act as a stress hormone and may be involved in the control of molting and reproduction. The polypeptide is Crustacean hyperglycemic hormones 7 (Penaeus japonicus (Kuruma prawn)).